We begin with the raw amino-acid sequence, 529 residues long: Bifunctional purine biosynthesis protein PurH (529 aa).

An MGS-like domain is found at 2-149 (TDLVPLRRAL…KNHSFVTVLT (148 aa)).

This sequence belongs to the PurH family.

It catalyses the reaction (6R)-10-formyltetrahydrofolate + 5-amino-1-(5-phospho-beta-D-ribosyl)imidazole-4-carboxamide = 5-formamido-1-(5-phospho-D-ribosyl)imidazole-4-carboxamide + (6S)-5,6,7,8-tetrahydrofolate. The enzyme catalyses IMP + H2O = 5-formamido-1-(5-phospho-D-ribosyl)imidazole-4-carboxamide. Its pathway is purine metabolism; IMP biosynthesis via de novo pathway; 5-formamido-1-(5-phospho-D-ribosyl)imidazole-4-carboxamide from 5-amino-1-(5-phospho-D-ribosyl)imidazole-4-carboxamide (10-formyl THF route): step 1/1. It participates in purine metabolism; IMP biosynthesis via de novo pathway; IMP from 5-formamido-1-(5-phospho-D-ribosyl)imidazole-4-carboxamide: step 1/1. In Dinoroseobacter shibae (strain DSM 16493 / NCIMB 14021 / DFL 12), this protein is Bifunctional purine biosynthesis protein PurH.